A 40-amino-acid chain; its full sequence is Mastoparan-like peptide 12c (40 aa).

The first 7 residues, 1-7 (MSAEALA), serve as a signal peptide directing secretion. The segment at 1–22 (MSAEALADPKADPLAGPNPDAD) is disordered. AXPX repeat units follow at residues 7–10 (ADPK), 11–14 (ADPL), 15–18 (AGPN), and 19–22 (PDAD). Positions 8–25 (DPKADPLAGPNPDADPEA) are excised as a propeptide. Leu39 bears the Leucine amide mark.

The protein belongs to the MCD family. Mastoparan subfamily. Expressed by the venom gland.

Its subcellular location is the secreted. Shows mast cell degranulation and antimicrobial activities against the Gram-negative bacteria E.coli ATCC 25922 (MIC=6.0 ug/ml), the Gram-positive bacteria S.aureus ATCC 2592 (MIC=3.0 ug/ml) and the fungus C.albicans ATCC 2002 (MIC=12 ug/ml). Exhibits little hemolytic activity against washed human erythrocytes. Its mast cell degranulation activity may be related to the activation of G-protein coupled receptors in mast cells as well as interaction with other proteins located in cell endosomal membranes in the mast cells. This is Mastoparan-like peptide 12c from Vespa magnifica (Hornet).